A 384-amino-acid polypeptide reads, in one-letter code: 8-amino-7-oxononanoate synthase (384 aa).

A substrate-binding site is contributed by arginine 21. 108–109 contacts pyridoxal 5'-phosphate; it reads GF. Histidine 133 lines the substrate pocket. Residues serine 179, histidine 207, and threonine 233 each coordinate pyridoxal 5'-phosphate. Lysine 236 bears the N6-(pyridoxal phosphate)lysine mark. Residue threonine 352 coordinates substrate.

Belongs to the class-II pyridoxal-phosphate-dependent aminotransferase family. BioF subfamily. As to quaternary structure, homodimer. Pyridoxal 5'-phosphate is required as a cofactor.

The catalysed reaction is 6-carboxyhexanoyl-[ACP] + L-alanine + H(+) = (8S)-8-amino-7-oxononanoate + holo-[ACP] + CO2. It participates in cofactor biosynthesis; biotin biosynthesis. In terms of biological role, catalyzes the decarboxylative condensation of pimeloyl-[acyl-carrier protein] and L-alanine to produce 8-amino-7-oxononanoate (AON), [acyl-carrier protein], and carbon dioxide. This Escherichia coli O6:K15:H31 (strain 536 / UPEC) protein is 8-amino-7-oxononanoate synthase.